The sequence spans 757 residues: Transferrin receptor protein 1 (757 aa).

At 1–67 the chain is on the cytoplasmic side; that stretch reads MMDQARSAIS…KHRRLNGRLC (67 aa). The segment at 1–67 is mediates interaction with SH3BP4; it reads MMDQARSAIS…KHRRLNGRLC (67 aa). S10 and S19 each carry phosphoserine. Phosphotyrosine is present on Y20. An Endocytosis signal motif is present at residues 20–23; that stretch reads YTRF. T21 is subject to Phosphothreonine. The residue at position 24 (S24) is a Phosphoserine. The Stop-transfer sequence motif lies at 58–61; that stretch reads KHRR. The S-palmitoyl cysteine moiety is linked to residue C67. Residues 68–88 traverse the membrane as a helical; Signal-anchor for type II membrane protein segment; it reads FGTIAVVIFFLIGFMIGYLGY. Residues 89-757 are Extracellular-facing; it reads CKRTEQKDCV…GDIWDIDNEF (669 aa). T103 is a glycosylation site (O-linked (GalNAc...) threonine). A PA domain is found at 220-310; that stretch reads SKATTVSGKL…GTGDPYTPGF (91 aa). N-linked (GlcNAc...) asparagine glycans are attached at residues N248 and N314. Positions 566–757 are ligand-binding; sequence NLDTYEKLIQ…GDIWDIDNEF (192 aa). The short motif at 643–645 is the Cell attachment site element; it reads RGD. N-linked (GlcNAc...) asparagine glycosylation is found at N719 and N724.

Belongs to the peptidase M28 family. M28B subfamily. Homodimer; disulfide-linked. Binds one transferrin molecule per subunit. Interacts with SH3BP4. Interacts with STEAP3; facilitates TFRC endocytosis in erythroid precursor cells. Stearoylated by ZDHHC6 which inhibits TFRC-mediated activation of the JNK pathway and promotes mitochondrial fragmentation. Stearoylation does not affect iron uptake. In terms of processing, N- and O-glycosylated, phosphorylated and palmitoylated.

Its subcellular location is the cell membrane. It is found in the melanosome. Functionally, cellular uptake of iron occurs via receptor-mediated endocytosis of ligand-occupied transferrin receptor into specialized endosomes. Endosomal acidification leads to iron release. The apotransferrin-receptor complex is then recycled to the cell surface with a return to neutral pH and the concomitant loss of affinity of apotransferrin for its receptor. Transferrin receptor is necessary for development of erythrocytes and the nervous system. Positively regulates T and B cell proliferation through iron uptake. Acts as a lipid sensor that regulates mitochondrial fusion by regulating activation of the JNK pathway. When dietary levels of stearate (C18:0) are low, promotes activation of the JNK pathway, resulting in HUWE1-mediated ubiquitination and subsequent degradation of the mitofusin MFN2 and inhibition of mitochondrial fusion. When dietary levels of stearate (C18:0) are high, TFRC stearoylation inhibits activation of the JNK pathway and thus degradation of the mitofusin MFN2. Mediates uptake of NICOL1 into fibroblasts where it may regulate extracellular matrix production. This chain is Transferrin receptor protein 1 (TFRC), found in Cricetulus griseus (Chinese hamster).